The sequence spans 955 residues: Kinesin heavy chain isoform 5C (955 aa).

The Kinesin motor domain occupies 8-327 (SIKVMCRFRP…LMFGQRAKTI (320 aa)). Residues glutamine 87, serine 89, serine 90, glycine 91, lysine 92, threonine 93, histidine 94, and lysine 99 each contribute to the ATP site. A microtubule-binding region spans residues 174 to 315 (VSSPEEVMDV…PSVFNEAETK (142 aa)). Residues 332–366 (SVNLELTAEEWKKKYEKEKEKNKALKSVIQHLEVE) are a coiled coil. Threonine 403 carries the phosphothreonine modification. Coiled coils occupy residues 413-538 (KEKY…LQEL) and 590-913 (ISKM…KNMA). A globular region spans residues 859–955 (CELPKLEKRL…GSSNSTHYQK (97 aa)). The tract at residues 909-955 (AKNMARRAHSAQIAKPIRPGHYPASSPTAVHAVRGGGGSSNSTHYQK) is disordered.

It belongs to the TRAFAC class myosin-kinesin ATPase superfamily. Kinesin family. Kinesin subfamily. Oligomer composed of two heavy chains and two light chains. Interacts with GRIP1. Interacts with TRAK1. Interacts with ZFYVE27. Interacts with KLC3.

It localises to the cytoplasm. It is found in the cytoskeleton. The protein resides in the cell projection. Its subcellular location is the dendrite. The enzyme catalyses ATP + H2O = ADP + phosphate + H(+). Its function is as follows. Microtubule-associated force-producing protein that may play a role in organelle transport. Has ATPase activity. Involved in synaptic transmission. Mediates dendritic trafficking of mRNAs. Required for anterograde axonal transportation of MAPK8IP3/JIP3 which is essential for MAPK8IP3/JIP3 function in axon elongation. This Rattus norvegicus (Rat) protein is Kinesin heavy chain isoform 5C (Kif5c).